The following is a 750-amino-acid chain: Mitochondrial 15S rRNA processing factor CCM1 (750 aa).

The N-terminal 82 residues, 1 to 82 (MFIGKKAPAA…KELKQLTRSV (82 aa)), are a transit peptide targeting the mitochondrion. 4 PPR repeats span residues 263 to 297 (SRATYELLIEAYGKNTNVAKMNEVIQEMKELGLQL), 298 to 333 (SPVVYTNVLSTCVYKTRDHQQAVKLFDSMKFLAGSM), 336 to 370 (QTREYQDIIVSYVNNDDIEKALDLYQEMLDQKLDF), and 371 to 406 (NQNIMVALARGCMSREQLRFKAWDFIFEIYRCGWEP).

The protein belongs to the CCM1 family. Binds to mitochondrial small subunit 15S rRNA.

The protein resides in the mitochondrion. In terms of biological role, regulates mitochondrial small subunit maturation by controlling 15S rRNA 5'-end processing. Localizes to the 5' precursor of the 15S rRNA in a position that is subsequently occupied by mS47 in the mature yeast mtSSU. Uses structure and sequence-specific RNA recognition, binding to a single-stranded region of the precursor and specifically recognizing bases -6 to -1. The exchange of Ccm1 for mS47 is coupled to the irreversible removal of precursor rRNA that is accompanied by conformational changes of the mitoribosomal proteins uS5m and mS26. These conformational changes signal completion of 5'-end rRNA processing through protection of the mature 5'-end of the 15S rRNA and stabilization of mS47. The removal of the 5' precursor together with the dissociation of Ccm1 may be catalyzed by the 5'-3' exoribonuclease Pet127. Involved in the specific removal of group I introns in mitochondrial encoded transcripts. The polypeptide is Mitochondrial 15S rRNA processing factor CCM1 (CCM1) (Clavispora lusitaniae (strain ATCC 42720) (Yeast)).